The sequence spans 35 residues: Photosystem II reaction center protein T (35 aa).

The helical transmembrane segment at 3–23 (ALVYTFLLVSTLGIIFFAIFF) threads the bilayer.

This sequence belongs to the PsbT family. PSII is composed of 1 copy each of membrane proteins PsbA, PsbB, PsbC, PsbD, PsbE, PsbF, PsbH, PsbI, PsbJ, PsbK, PsbL, PsbM, PsbT, PsbY, PsbZ, Psb30/Ycf12, at least 3 peripheral proteins of the oxygen-evolving complex and a large number of cofactors. It forms dimeric complexes.

Its subcellular location is the plastid. The protein resides in the chloroplast thylakoid membrane. Functionally, found at the monomer-monomer interface of the photosystem II (PS II) dimer, plays a role in assembly and dimerization of PSII. PSII is a light-driven water plastoquinone oxidoreductase, using light energy to abstract electrons from H(2)O, generating a proton gradient subsequently used for ATP formation. The sequence is that of Photosystem II reaction center protein T from Cycas revoluta (Sago palm).